We begin with the raw amino-acid sequence, 509 residues long: Putative ATP-dependent RNA helicase QP509L (509 aa).

A Helicase ATP-binding domain is found at K110–P262. L123–T130 contributes to the ATP binding site. A DEAH box motif is present at residues D215–H218.

Belongs to the DEAD box helicase family. DEAH subfamily.

The enzyme catalyses ATP + H2O = ADP + phosphate + H(+). The sequence is that of Putative ATP-dependent RNA helicase QP509L from African swine fever virus (strain Badajoz 1971 Vero-adapted) (Ba71V).